A 412-amino-acid polypeptide reads, in one-letter code: Probable cystathionine gamma-synthase 2 (412 aa).

Pyridoxal 5'-phosphate-binding residues include tyrosine 76, arginine 78, glycine 106, methionine 107, tyrosine 131, serine 226, and threonine 228. N6-(pyridoxal phosphate)lysine is present on lysine 229.

It belongs to the trans-sulfuration enzymes family. Pyridoxal 5'-phosphate serves as cofactor.

The catalysed reaction is O-phospho-L-homoserine + L-cysteine = L,L-cystathionine + phosphate. It catalyses the reaction O-succinyl-L-homoserine + L-cysteine = L,L-cystathionine + succinate + H(+). The protein operates within amino-acid biosynthesis; L-methionine biosynthesis via de novo pathway; L-cystathionine from O-succinyl-L-homoserine: step 1/1. Catalyzes the first committed step of methionine (Met) biosynthesis. Catalyzes the formation of L-cystathionine from homoserine esters and L-cysteine, via a gamma-replacement reaction. The polypeptide is Probable cystathionine gamma-synthase 2 (Arabidopsis thaliana (Mouse-ear cress)).